A 617-amino-acid polypeptide reads, in one-letter code: Acyl-CoA dehydrogenase family member 11 (617 aa).

Residues 1–47 (MHRIGNAVRMASSSSANATITARHTQYSHAKTGGFSQTGPTLHNPYK) form a disordered region. A compositionally biased stretch (low complexity) spans 11-22 (ASSSSANATITA). Polar residues predominate over residues 23–41 (RHTQYSHAKTGGFSQTGPT). FAD is bound by residues 206–215 (QWMTEKKGGS) and 241–243 (FSS). Ser215 is a binding site for substrate. Substrate is bound by residues Ser267 and Arg334. Residues Arg359, 366–369 (QSKW), Glu437, Gly441, and 464–466 (EGT) each bind FAD.

This sequence belongs to the acyl-CoA dehydrogenase family. Homotetramer; dimer of dimers.

Functionally, promotes adaption to elevated temperatures by regulating expression of the lipid desaturase, fat-7. Binds selectively and with high affinity to fatty acids with chain lengths from C10 to C12 and prevents them from activating fat-7 expression mediated by the nuclear hormone receptor nhr-49, leading to low levels of membrane lipid desaturation and membrane fluidity for adaption to heat. This chain is Acyl-CoA dehydrogenase family member 11, found in Caenorhabditis elegans.